The sequence spans 55 residues: HTH-type transcriptional regulator MerD (55 aa).

Positions 3–55 constitute an HTH merR-type domain; it reads AYTVSRLALDAGVSVHIVRDYLLRGLLRPVACTPGGYGLFDDAALQRLCFVRA. The H-T-H motif DNA-binding region spans 6–25; it reads VSRLALDAGVSVHIVRDYLL.

The protein is HTH-type transcriptional regulator MerD (merD) of Pseudomonas fluorescens.